We begin with the raw amino-acid sequence, 421 residues long: UV-B-induced protein At3g17800, chloroplastic (421 aa).

Disordered regions lie at residues Met-1 to Ser-40 and Val-74 to Leu-95. The transit peptide at Met-1 to Arg-75 directs the protein to the chloroplast. A compositionally biased stretch (polar residues) spans Ser-16–Leu-28. Residues Val-74–Ser-88 are compositionally biased toward low complexity.

The protein resides in the plastid. The protein localises to the chloroplast. The chain is UV-B-induced protein At3g17800, chloroplastic from Arabidopsis thaliana (Mouse-ear cress).